We begin with the raw amino-acid sequence, 252 residues long: Phosphomannomutase (252 aa).

Residue Asp-13 is the Nucleophile of the active site. Mg(2+)-binding residues include Asp-13 and Asp-15. The active-site Proton donor/acceptor is the Asp-15. The alpha-D-mannose 1-phosphate site is built by Arg-22, Arg-124, Arg-135, Arg-142, Ser-180, and Asp-182. Mg(2+) is bound by residues Asp-208, Tyr-220, and Thr-225.

It belongs to the eukaryotic PMM family. In terms of assembly, homodimer. Mg(2+) is required as a cofactor. Expressed in roots, leaves, stems and flowers.

The protein localises to the cytoplasm. It carries out the reaction alpha-D-mannose 1-phosphate = D-mannose 6-phosphate. It participates in nucleotide-sugar biosynthesis; GDP-alpha-D-mannose biosynthesis; alpha-D-mannose 1-phosphate from D-fructose 6-phosphate: step 2/2. Functionally, catalyzes the interconversion of mannose-6-phosphate to mannose-1-phosphate, the precursor for the synthesis of GDP-mannose. GDP-mannose is an essential sugar nucleotide for the synthesis of D-mannose-containing cell wall polysaccharides (galactomannans and glucomannans), glycolipids, glycoproteins and the antioxidant L-ascorbate. Involved in the biosynthesis of ascorbate and polysaccharides in response to abiotic stress during seed germination. This chain is Phosphomannomutase, found in Dendrobium officinale (Orchid).